The sequence spans 547 residues: Glucose-6-phosphate isomerase (547 aa).

Glu-351 (proton donor) is an active-site residue. Catalysis depends on residues His-382 and Lys-511.

This sequence belongs to the GPI family.

The protein resides in the cytoplasm. The enzyme catalyses alpha-D-glucose 6-phosphate = beta-D-fructose 6-phosphate. Its pathway is carbohydrate biosynthesis; gluconeogenesis. The protein operates within carbohydrate degradation; glycolysis; D-glyceraldehyde 3-phosphate and glycerone phosphate from D-glucose: step 2/4. In terms of biological role, catalyzes the reversible isomerization of glucose-6-phosphate to fructose-6-phosphate. The polypeptide is Glucose-6-phosphate isomerase (Xanthobacter autotrophicus (strain ATCC BAA-1158 / Py2)).